The primary structure comprises 132 residues: Fatty acid-binding protein 1 (132 aa).

Residues Arg106 and 128 to 130 contribute to the a fatty acid site; that span reads RYY.

Belongs to the calycin superfamily. Fatty-acid binding protein (FABP) family. As to quaternary structure, monomer. Midgut.

It localises to the cytoplasm. In terms of biological role, binds fatty acids in a 1:1 molar ratio. The protein is Fatty acid-binding protein 1 (MFB1) of Manduca sexta (Tobacco hawkmoth).